Consider the following 532-residue polypeptide: Flavin-containing monooxygenase 3 (532 aa).

FAD is bound by residues 9–13, Glu32, 40–41, and 61–62; these read GAGVS, LW, and NS. NADP(+) contacts are provided by residues 60-61 and 195-198; these read TN and SGCD. Phosphoserine is present on Ser401. A helical membrane pass occupies residues 512–532; the sequence is CHLVKLFVLPVLFIAVFLALI.

The protein belongs to the FMO family. FAD is required as a cofactor.

It localises to the microsome membrane. The protein localises to the endoplasmic reticulum membrane. The enzyme catalyses trimethylamine + NADPH + O2 = trimethylamine N-oxide + NADP(+) + H2O. It catalyses the reaction N,N-dimethylaniline + NADPH + O2 + H(+) = N,N-dimethylaniline N-oxide + NADP(+) + H2O. The catalysed reaction is hypotaurine + NADPH + O2 + H(+) = taurine + NADP(+) + H2O. It carries out the reaction (S)-nicotine + NADPH + O2 = trans-(S)-nicotine N(1')-oxide + NADP(+) + H2O. The enzyme catalyses albendazole + NADPH + O2 + H(+) = albendazole S-oxide + NADP(+) + H2O. Functionally, essential hepatic enzyme that catalyzes the oxygenation of a wide variety of nitrogen- and sulfur-containing compounds including drugs as well as dietary compounds. Plays an important role in the metabolism of trimethylamine (TMA), via the production of trimethylamine N-oxide (TMAO) metabolite. TMA is generated by the action of gut microbiota using dietary precursors such as choline, choline containing compounds, betaine or L-carnitine. By regulating TMAO concentration, FMO3 directly impacts both platelet responsiveness and rate of thrombus formation. In Canis lupus familiaris (Dog), this protein is Flavin-containing monooxygenase 3 (FMO3).